Reading from the N-terminus, the 98-residue chain is NADH-ubiquinone oxidoreductase chain 4L (98 aa).

3 helical membrane-spanning segments follow: residues 1–21, 29–49, and 61–81; these read MSLV…GLLM, SLLC…LIIL, and IILL…LVMV.

The protein belongs to the complex I subunit 4L family. As to quaternary structure, core subunit of respiratory chain NADH dehydrogenase (Complex I) which is composed of 45 different subunits.

The protein localises to the mitochondrion inner membrane. The enzyme catalyses a ubiquinone + NADH + 5 H(+)(in) = a ubiquinol + NAD(+) + 4 H(+)(out). Core subunit of the mitochondrial membrane respiratory chain NADH dehydrogenase (Complex I) which catalyzes electron transfer from NADH through the respiratory chain, using ubiquinone as an electron acceptor. Part of the enzyme membrane arm which is embedded in the lipid bilayer and involved in proton translocation. This Hippopotamus amphibius (Hippopotamus) protein is NADH-ubiquinone oxidoreductase chain 4L (MT-ND4L).